The following is a 268-amino-acid chain: Indole-3-glycerol phosphate synthase (268 aa).

It belongs to the TrpC family.

The catalysed reaction is 1-(2-carboxyphenylamino)-1-deoxy-D-ribulose 5-phosphate + H(+) = (1S,2R)-1-C-(indol-3-yl)glycerol 3-phosphate + CO2 + H2O. The protein operates within amino-acid biosynthesis; L-tryptophan biosynthesis; L-tryptophan from chorismate: step 4/5. In Magnetococcus marinus (strain ATCC BAA-1437 / JCM 17883 / MC-1), this protein is Indole-3-glycerol phosphate synthase.